Consider the following 139-residue polypeptide: D-ribose pyranase (139 aa).

Residue H20 is the Proton donor of the active site. Substrate-binding positions include D28, H106, and 128–130 (YAN).

Belongs to the RbsD / FucU family. RbsD subfamily. As to quaternary structure, homodecamer.

The protein localises to the cytoplasm. It catalyses the reaction beta-D-ribopyranose = beta-D-ribofuranose. It functions in the pathway carbohydrate metabolism; D-ribose degradation; D-ribose 5-phosphate from beta-D-ribopyranose: step 1/2. Catalyzes the interconversion of beta-pyran and beta-furan forms of D-ribose. The protein is D-ribose pyranase of Escherichia coli (strain 55989 / EAEC).